The chain runs to 131 residues: Small ribosomal subunit protein uS11 (131 aa).

Belongs to the universal ribosomal protein uS11 family. Part of the 30S ribosomal subunit. Interacts with proteins S7 and S18. Binds to IF-3.

Functionally, located on the platform of the 30S subunit, it bridges several disparate RNA helices of the 16S rRNA. Forms part of the Shine-Dalgarno cleft in the 70S ribosome. The protein is Small ribosomal subunit protein uS11 of Syntrophotalea carbinolica (strain DSM 2380 / NBRC 103641 / GraBd1) (Pelobacter carbinolicus).